The chain runs to 77 residues: Sec-independent protein translocase protein TatA (77 aa).

A helical membrane pass occupies residues M1–G21. The span at G42–E60 shows a compositional bias: basic and acidic residues. A disordered region spans residues G42–V77.

This sequence belongs to the TatA/E family. As to quaternary structure, the Tat system comprises two distinct complexes: a TatABC complex, containing multiple copies of TatA, TatB and TatC subunits, and a separate TatA complex, containing only TatA subunits. Substrates initially bind to the TatABC complex, which probably triggers association of the separate TatA complex to form the active translocon.

It localises to the cell inner membrane. In terms of biological role, part of the twin-arginine translocation (Tat) system that transports large folded proteins containing a characteristic twin-arginine motif in their signal peptide across membranes. TatA could form the protein-conducting channel of the Tat system. The sequence is that of Sec-independent protein translocase protein TatA from Bradyrhizobium diazoefficiens (strain JCM 10833 / BCRC 13528 / IAM 13628 / NBRC 14792 / USDA 110).